Consider the following 371-residue polypeptide: Ligninase LG2 (371 aa).

An N-terminal signal peptide occupies residues 1–21 (MAFKQLFAAITVALSLTAANA). The propeptide occupies 22 to 28 (AVVKEKR). Cystine bridges form between C31-C43, C42-C313, C62-C148, and C277-C345. The active-site Proton acceptor is the H75. Positions 76, 94, 96, and 98 each coordinate Ca(2+). W199 is modified (3-hydroxytryptophan). Residue H204 participates in heme b binding. Ca(2+) is bound by residues S205, D222, T224, I227, and D229. An N-linked (GlcNAc...) asparagine glycan is attached at N285.

This sequence belongs to the peroxidase family. Ligninase subfamily. Requires Ca(2+) as cofactor. Heme b is required as a cofactor.

It carries out the reaction 1-(3,4-dimethoxyphenyl)-2-(2-methoxyphenoxy)propane-1,3-diol + H2O2 = 3,4-dimethoxybenzaldehyde + guaiacol + glycolaldehyde + H2O. The catalysed reaction is 2 (3,4-dimethoxyphenyl)methanol + H2O2 = 2 (3,4-dimethoxyphenyl)methanol radical + 2 H2O. Its pathway is secondary metabolite metabolism; lignin degradation. Depolymerization of lignin. Catalyzes the C(alpha)-C(beta) cleavage of the propyl side chains of lignin. The protein is Ligninase LG2 (GLG2) of Phanerodontia chrysosporium (White-rot fungus).